The primary structure comprises 89 residues: Small ribosomal subunit protein uS15 (89 aa).

It belongs to the universal ribosomal protein uS15 family. As to quaternary structure, part of the 30S ribosomal subunit. Forms a bridge to the 50S subunit in the 70S ribosome, contacting the 23S rRNA.

One of the primary rRNA binding proteins, it binds directly to 16S rRNA where it helps nucleate assembly of the platform of the 30S subunit by binding and bridging several RNA helices of the 16S rRNA. Functionally, forms an intersubunit bridge (bridge B4) with the 23S rRNA of the 50S subunit in the ribosome. This is Small ribosomal subunit protein uS15 from Paenarthrobacter aurescens (strain TC1).